The sequence spans 198 residues: Carnitine operon protein CaiE (198 aa).

Residues 179–198 (VEENRPRLKGTTDVKPKSAQ) form a disordered region. Basic and acidic residues predominate over residues 180–198 (EENRPRLKGTTDVKPKSAQ).

This sequence belongs to the transferase hexapeptide repeat family.

It functions in the pathway amine and polyamine metabolism; carnitine metabolism. Functionally, overproduction of CaiE stimulates the activity of CaiB and CaiD. This is Carnitine operon protein CaiE from Salmonella agona (strain SL483).